A 285-amino-acid polypeptide reads, in one-letter code: Xanthoxin dehydrogenase (285 aa).

The residue at position 2 (serine 2) is an N-acetylserine.

The protein belongs to the short-chain dehydrogenases/reductases (SDR) family. In terms of tissue distribution, predominantly in roots and stems, and at lower levels in leaves and seeds.

The protein localises to the cytoplasm. The enzyme catalyses 2-cis,4-trans-xanthoxin + NAD(+) = 2-cis-(+)-abscisic aldehyde + NADH + H(+). The catalysed reaction is 2-trans,4-trans-xanthoxin + NAD(+) = 2-trans-(+)-abscisic aldehyde + NADH + H(+). Involved in the biosynthesis of abscisic acid. Catalyzes the conversion of xanthoxin to abscisic aldehyde. The chain is Xanthoxin dehydrogenase from Arabidopsis thaliana (Mouse-ear cress).